The chain runs to 377 residues: uncharacterized protein (377 aa).

Positions M1–G23 are cleaved as a signal peptide. A lipid anchor (N-palmitoyl cysteine) is attached at C24. Residue C24 is the site of S-diacylglycerol cysteine attachment.

It is found in the cell membrane. This is an uncharacterized protein from Mycoplasma genitalium (strain ATCC 33530 / DSM 19775 / NCTC 10195 / G37) (Mycoplasmoides genitalium).